The following is a 734-amino-acid chain: Photosystem I P700 chlorophyll a apoprotein A2 (734 aa).

8 helical membrane passes run 46–69 (IFAS…FHVA), 135–158 (LYSG…LHLQ), 175–199 (LNHH…HVAI), 273–291 (MAHH…GHMY), 330–353 (IHFQ…QHMY), 369–395 (AALY…IFFI), 417–439 (AIIS…LYVH), and 517–535 (FLVH…LILV). [4Fe-4S] cluster-binding residues include Cys-559 and Cys-568. The next 2 helical transmembrane spans lie at 575–596 (AFYL…YWHW) and 643–665 (LSVW…MFLI). Chlorophyll a is bound by residues His-654, Met-662, and Tyr-670. Phylloquinone is bound at residue Trp-671. The chain crosses the membrane as a helical span at residues 707 to 727 (LVGLAHFSVGYIFTYAAFLIA).

It belongs to the PsaA/PsaB family. The PsaA/B heterodimer binds the P700 chlorophyll special pair and subsequent electron acceptors. PSI consists of a core antenna complex that captures photons, and an electron transfer chain that converts photonic excitation into a charge separation. The eukaryotic PSI reaction center is composed of at least 11 subunits. The cofactor is P700 is a chlorophyll a/chlorophyll a' dimer, A0 is one or more chlorophyll a, A1 is one or both phylloquinones and FX is a shared 4Fe-4S iron-sulfur center..

The protein resides in the plastid. The protein localises to the chloroplast thylakoid membrane. It catalyses the reaction reduced [plastocyanin] + hnu + oxidized [2Fe-2S]-[ferredoxin] = oxidized [plastocyanin] + reduced [2Fe-2S]-[ferredoxin]. In terms of biological role, psaA and PsaB bind P700, the primary electron donor of photosystem I (PSI), as well as the electron acceptors A0, A1 and FX. PSI is a plastocyanin-ferredoxin oxidoreductase, converting photonic excitation into a charge separation, which transfers an electron from the donor P700 chlorophyll pair to the spectroscopically characterized acceptors A0, A1, FX, FA and FB in turn. Oxidized P700 is reduced on the lumenal side of the thylakoid membrane by plastocyanin. This chain is Photosystem I P700 chlorophyll a apoprotein A2, found in Lotus japonicus (Lotus corniculatus var. japonicus).